The primary structure comprises 489 residues: Putative (R)-citramalate synthase CimA (489 aa).

A Pyruvate carboxyltransferase domain is found at 3–255 (VKILDTTLRD…KTKIKKERLY (253 aa)).

Belongs to the alpha-IPM synthase/homocitrate synthase family. Homodimer.

The enzyme catalyses pyruvate + acetyl-CoA + H2O = (3R)-citramalate + CoA + H(+). It participates in amino-acid biosynthesis; L-isoleucine biosynthesis; 2-oxobutanoate from pyruvate: step 1/3. Its function is as follows. Catalyzes the condensation of pyruvate and acetyl-coenzyme A to form (R)-citramalate. The sequence is that of Putative (R)-citramalate synthase CimA (cimA) from Archaeoglobus fulgidus (strain ATCC 49558 / DSM 4304 / JCM 9628 / NBRC 100126 / VC-16).